The primary structure comprises 222 residues: N-(5'-phosphoribosyl)anthranilate isomerase (222 aa).

It belongs to the TrpF family.

It catalyses the reaction N-(5-phospho-beta-D-ribosyl)anthranilate = 1-(2-carboxyphenylamino)-1-deoxy-D-ribulose 5-phosphate. Its pathway is amino-acid biosynthesis; L-tryptophan biosynthesis; L-tryptophan from chorismate: step 3/5. In Rhizobium leguminosarum bv. trifolii (strain WSM2304), this protein is N-(5'-phosphoribosyl)anthranilate isomerase.